The chain runs to 1087 residues: A-kinase anchor protein 9 (1087 aa).

Residues 5–461 (EVQCQAEKVR…REREKMERIQ (457 aa)) adopt a coiled-coil conformation. The segment at 559 to 572 (SLQKVLEEKVAAAL) is PKA-RII subunit binding domain. Residues 614–773 (MESDVSALTW…SEKEDKTEVQ (160 aa)) adopt a coiled-coil conformation. The span at 667 to 685 (VQDSETKQRERERQSRLHG) shows a compositional bias: basic and acidic residues. The tract at residues 667 to 691 (VQDSETKQRERERQSRLHGDLGVLE) is disordered.

Interacts with the regulatory region of protein kinase N (PKN), protein phosphatase 2A (PP2A), protein phosphatase 1 (PP1) and the immature non-phosphorylated form of PKC epsilon. Interacts with CIP4 and FNBP1. Interacts with chloride intracellular channel proteins CLIC1, CLIC4 and CLIC5. CSNK1D binding promotes its centrosomal subcellular location. Interacts with GM130/GOLGA2; leading to recruitment to the Golgi apparatus. Interacts with KCNQ1; targets protein kinase A (PKA) catalytic and regulatory subunits and protein phosphatase 1 (PP1), to the heterodimer KCNQ1-KCNE1. Interacts with PDE4DIP; this interaction stabilizes both proteins. In complex with PDE4DIP, recruits CAMSAP2 to the Golgi apparatus. Forms a pericentrosomal complex with CDK5RAP2, EB1/MAPRE1 and PDE4DIP; within this complex, MAPRE1 binding to CDK5RAP2 may be mediated by PDE4DIP. The interaction with PDE4DIP is isoform-specific. Interacts with MAPRE1 and MAPRE3. Interacts (via C-terminus) with CAMSAP2; this interaction is much stronger in the presence of PDE4DIP. Interacts with CAMSAP3. Interacts (via C-terminus) with the gamma-tubulin ring complex (gamma-TuRC), composed of gamma-tubulin, TUBGCP2, TUBGCP3, TUBGCP4, TUBGCP5 and TUBGCP6. In terms of tissue distribution, highly expressed in gastric parietal cells.

The protein localises to the golgi apparatus. It localises to the cytoplasm. The protein resides in the cytoskeleton. Its subcellular location is the microtubule organizing center. It is found in the centrosome. Its function is as follows. Scaffolding protein that assembles several protein kinases and phosphatases on the centrosome and Golgi apparatus. Required to maintain the integrity of the Golgi apparatus. Required for microtubule nucleation at the cis-side of the Golgi apparatus. Required for association of the centrosomes with the poles of the bipolar mitotic spindle during metaphase. In complex with PDE4DIP, recruits CAMSAP2 to the Golgi apparatus and tethers non-centrosomal minus-end microtubules to the Golgi, an important step for polarized cell movement. In complex with PDE4DIP, EB1/MAPRE1 and CDK5RAP2, contributes to microtubules nucleation and extension also from the centrosome to the cell periphery. The interaction with PDE4DIP is isoform-specific. This is A-kinase anchor protein 9 (AKAP9) from Oryctolagus cuniculus (Rabbit).